The chain runs to 63 residues: Large ribosomal subunit protein bL32 (63 aa).

Disordered regions lie at residues 1 to 25 (MAVP…LTTP) and 42 to 63 (VSPK…QNND). A compositionally biased stretch (basic residues) spans 7-20 (KTSKQKKRSRRGHI). Residues 54–63 (ANENKQQNND) are compositionally biased toward polar residues.

Belongs to the bacterial ribosomal protein bL32 family.

This Lactobacillus johnsonii (strain CNCM I-12250 / La1 / NCC 533) protein is Large ribosomal subunit protein bL32.